We begin with the raw amino-acid sequence, 626 residues long: Cysteine desulfurase (626 aa).

Disordered regions lie at residues 1 to 21 and 41 to 64; these read MTNT…SDPF and AGVS…PTTS. The tract at residues 1 to 225 is cargo-loading domain; it reads MTNTVPSVPA…AGAVGFDIHQ (225 aa). The cysteine desulfurase domain stretch occupies residues 226 to 626; it reads VRRDFPILQE…RRIQTGSLAL (401 aa). At Lys444 the chain carries N6-(pyridoxal phosphate)lysine. Cys582 acts as the Cysteine persulfide intermediate in catalysis.

Belongs to the class-V pyridoxal-phosphate-dependent aminotransferase family. Csd subfamily. In terms of assembly, there are 1-2 copies of this protein in each type 2A encapsulin shell. Requires pyridoxal 5'-phosphate as cofactor.

Its subcellular location is the encapsulin nanocompartment. The catalysed reaction is (sulfur carrier)-H + L-cysteine = (sulfur carrier)-SH + L-alanine. Its activity is regulated as follows. Encapsulated enzyme is 7-fold more active than encapsulated enzyme. Cargo protein of a type 2A encapsulin nanocompartment probably involved in sulfur metabolism. Cysteine desulfurases mobilize the sulfur from L-cysteine to yield L-alanine, an essential step in sulfur metabolism for biosynthesis of a variety of sulfur-containing biomolecules. This Synechococcus elongatus (strain ATCC 33912 / PCC 7942 / FACHB-805) (Anacystis nidulans R2) protein is Cysteine desulfurase.